Consider the following 85-residue polypeptide: Conotoxin Lt28.3 (85 aa).

An N-terminal signal peptide occupies residues 1 to 21; sequence MPKLEMMLLVLLILPLCYIDA. A propeptide spanning residues 22 to 40 is cleaved from the precursor; that stretch reads VGPLPPWNMEDEIIEHWQK.

It belongs to the conotoxin D superfamily. Contains 5 disulfide bonds. Expressed by the venom duct.

The protein resides in the secreted. Functionally, probable neurotoxin. The polypeptide is Conotoxin Lt28.3 (Conus litteratus (Lettered cone)).